A 357-amino-acid chain; its full sequence is Phospho-N-acetylmuramoyl-pentapeptide-transferase (357 aa).

Transmembrane regions (helical) follow at residues 23–43, 70–90, 91–111, 127–147, 171–191, 196–216, 236–256, 260–280, 286–306, and 334–354; these read AIFS…YFIY, TMGG…YCNL, SNIY…IGFI, LKWK…MIKI, YLYV…VNLT, GLAI…SLFS, LAIL…FNSY, VFMG…IAIL, LLII…LQII, and LIIV…LISL.

Belongs to the glycosyltransferase 4 family. MraY subfamily. Mg(2+) serves as cofactor.

It is found in the cell inner membrane. It carries out the reaction UDP-N-acetyl-alpha-D-muramoyl-L-alanyl-gamma-D-glutamyl-meso-2,6-diaminopimeloyl-D-alanyl-D-alanine + di-trans,octa-cis-undecaprenyl phosphate = di-trans,octa-cis-undecaprenyl diphospho-N-acetyl-alpha-D-muramoyl-L-alanyl-D-glutamyl-meso-2,6-diaminopimeloyl-D-alanyl-D-alanine + UMP. The protein operates within cell wall biogenesis; peptidoglycan biosynthesis. Its function is as follows. Catalyzes the initial step of the lipid cycle reactions in the biosynthesis of the cell wall peptidoglycan: transfers peptidoglycan precursor phospho-MurNAc-pentapeptide from UDP-MurNAc-pentapeptide onto the lipid carrier undecaprenyl phosphate, yielding undecaprenyl-pyrophosphoryl-MurNAc-pentapeptide, known as lipid I. This chain is Phospho-N-acetylmuramoyl-pentapeptide-transferase, found in Buchnera aphidicola subsp. Acyrthosiphon pisum (strain Tuc7).